We begin with the raw amino-acid sequence, 347 residues long: Endothelin receptor type B (347 aa).

The Extracellular portion of the chain corresponds to 1–7; sequence EIKETFK. A helical transmembrane segment spans residues 8–32; that stretch reads YINTVVSCLVFVLGIIGNSTLLRII. The Cytoplasmic segment spans residues 33–43; sequence YKNKCMRNGPN. A helical transmembrane segment spans residues 44–69; the sequence is ILIASLALGDLLHIIIDIPISVYKLL. Over 70 to 81 the chain is Extracellular; the sequence is AEDWPFGVEMCK. A disulfide bond links Cys-80 and Cys-161. Residues 82–103 form a helical membrane-spanning segment; that stretch reads LVPFIQKASVGITVLSLCALSI. Residues 104–124 are Cytoplasmic-facing; it reads DRYRAVASWSRIKGIGVPKWT. Residues 125-149 form a helical membrane-spanning segment; that stretch reads AVEIVLIWVISVVLAVPEAIAFDMI. Residues 150-177 are Extracellular-facing; that stretch reads TMEYRGKDLRICLLHPTQKTSFMMFYKQ. A helical transmembrane segment spans residues 178–202; the sequence is AKDWWLFSFYFCLPLAITALFYTLM. Topologically, residues 203 to 230 are cytoplasmic; it reads TCEMLRKKSGMQIALNDHLKQRREVAKT. A helical transmembrane segment spans residues 231–256; it reads VFCLVLVFALCWLPLHLSRILKLTIY. Residues 257 to 268 lie on the Extracellular side of the membrane; sequence DQKDPNRCELLS. A helical transmembrane segment spans residues 269–295; sequence FFLVMDYIGINMASLNSCINPIALYLV. The Cytoplasmic segment spans residues 296-347; that stretch reads SKRFQNCFKSCLCCWCQSKDLLSLEERQSCLKFKANDHGYDNFRSSNKYSSS. Residues Cys-309 and Cys-311 are each lipidated (S-palmitoyl cysteine).

The protein belongs to the G-protein coupled receptor 1 family. Endothelin receptor subfamily. EDNRB sub-subfamily.

It is found in the cell membrane. Non-specific receptor for endothelin 1, 2, and 3. Mediates its action by association with G proteins that activate a phosphatidylinositol-calcium second messenger system. The polypeptide is Endothelin receptor type B (EDNRB) (Coturnix japonica (Japanese quail)).